We begin with the raw amino-acid sequence, 458 residues long: Exodeoxyribonuclease 7 large subunit (458 aa).

Belongs to the XseA family. As to quaternary structure, heterooligomer composed of large and small subunits.

The protein localises to the cytoplasm. It catalyses the reaction Exonucleolytic cleavage in either 5'- to 3'- or 3'- to 5'-direction to yield nucleoside 5'-phosphates.. Bidirectionally degrades single-stranded DNA into large acid-insoluble oligonucleotides, which are then degraded further into small acid-soluble oligonucleotides. The protein is Exodeoxyribonuclease 7 large subunit of Escherichia coli O6:H1 (strain CFT073 / ATCC 700928 / UPEC).